Consider the following 229-residue polypeptide: 2,3-bisphosphoglycerate-dependent phosphoglycerate mutase (229 aa).

Substrate-binding positions include arginine 7–asparagine 14, threonine 20–glycine 21, arginine 59, glutamate 86–tyrosine 89, lysine 97, arginine 113–arginine 114, and glycine 182–asparagine 183. Histidine 8 acts as the Tele-phosphohistidine intermediate in catalysis. The active-site Proton donor/acceptor is the glutamate 86.

This sequence belongs to the phosphoglycerate mutase family. BPG-dependent PGAM subfamily.

The enzyme catalyses (2R)-2-phosphoglycerate = (2R)-3-phosphoglycerate. It functions in the pathway carbohydrate degradation; glycolysis; pyruvate from D-glyceraldehyde 3-phosphate: step 3/5. Its function is as follows. Catalyzes the interconversion of 2-phosphoglycerate and 3-phosphoglycerate. This chain is 2,3-bisphosphoglycerate-dependent phosphoglycerate mutase, found in Listeria monocytogenes serotype 4b (strain F2365).